The chain runs to 446 residues: Glycine--tRNA ligase (446 aa).

The substrate site is built by Arg-100 and Glu-158. Residues Arg-190 to Glu-192, Phe-200 to Phe-205, Glu-275 to Leu-276, and Gly-319 to Arg-322 each bind ATP. Position 205-209 (Phe-205–Glu-209) interacts with substrate. Glu-315–Gly-319 is a substrate binding site.

The protein belongs to the class-II aminoacyl-tRNA synthetase family. As to quaternary structure, homodimer.

The protein localises to the cytoplasm. The catalysed reaction is tRNA(Gly) + glycine + ATP = glycyl-tRNA(Gly) + AMP + diphosphate. Its function is as follows. Catalyzes the attachment of glycine to tRNA(Gly). This Mycoplasma genitalium (strain ATCC 33530 / DSM 19775 / NCTC 10195 / G37) (Mycoplasmoides genitalium) protein is Glycine--tRNA ligase.